We begin with the raw amino-acid sequence, 178 residues long: Large ribosomal subunit protein uL6 (178 aa).

This sequence belongs to the universal ribosomal protein uL6 family. In terms of assembly, part of the 50S ribosomal subunit.

This protein binds to the 23S rRNA, and is important in its secondary structure. It is located near the subunit interface in the base of the L7/L12 stalk, and near the tRNA binding site of the peptidyltransferase center. In Streptococcus pyogenes serotype M3 (strain ATCC BAA-595 / MGAS315), this protein is Large ribosomal subunit protein uL6.